Reading from the N-terminus, the 895-residue chain is Probable LRR receptor-like serine/threonine-protein kinase At5g48740 (895 aa).

The N-terminal stretch at 1–16 (MLFWVLLSSFCVFCFS) is a signal peptide. Over 17 to 544 (SPDGFLSLSC…INKKQRKQNR (528 aa)) the chain is Extracellular. Residues Asn-36, Asn-50, Asn-60, Asn-140, Asn-195, Asn-234, and Asn-318 are each glycosylated (N-linked (GlcNAc...) asparagine). LRR repeat units lie at residues 385 to 407 (RVTS…GDLL), 408 to 430 (DLKT…GSLK), 431 to 453 (DLQK…EDLV), 454 to 477 (NLEV…GKLK), 478 to 500 (KLRL…LNIT), and 511 to 532 (CLSF…PQVT). Asn-416, Asn-436, Asn-462, Asn-498, and Asn-521 each carry an N-linked (GlcNAc...) asparagine glycan. Residues 545-565 (IAILLGVSGGALFATFLVFVF) form a helical membrane-spanning segment. The Cytoplasmic portion of the chain corresponds to 566–895 (MSIFTRRQRN…SYLAASAHTD (330 aa)). Residues 606 to 888 (RNFKEVIGRG…EAYSLQLSYL (283 aa)) enclose the Protein kinase domain. ATP contacts are provided by residues 612-620 (IGRGSFGAV) and Lys-634. At Tyr-679 the chain carries Phosphotyrosine. Asp-732 (proton acceptor) is an active-site residue. At Ser-736 the chain carries Phosphoserine. A phosphothreonine mark is found at Thr-767 and Thr-772. Phosphotyrosine is present on Tyr-780.

This sequence belongs to the protein kinase superfamily. Ser/Thr protein kinase family.

It localises to the membrane. The catalysed reaction is L-seryl-[protein] + ATP = O-phospho-L-seryl-[protein] + ADP + H(+). It catalyses the reaction L-threonyl-[protein] + ATP = O-phospho-L-threonyl-[protein] + ADP + H(+). The sequence is that of Probable LRR receptor-like serine/threonine-protein kinase At5g48740 from Arabidopsis thaliana (Mouse-ear cress).